The sequence spans 420 residues: Tubulin-specific chaperone C (420 aa).

Residues 9–142 (NNNNDEENSK…QIDKSKEKYM (134 aa)) adopt a coiled-coil conformation. Residues 31 to 49 (KQRLQSKLEKREISNKEQI) show a composition bias toward basic and acidic residues. Disordered regions lie at residues 31-52 (KQRL…IDQS), 138-193 (KEKY…NNNK), and 222-257 (EIGN…NNNN). Low complexity-rich tracts occupy residues 172–192 (ETFN…NNNN) and 228–257 (INNN…NNNN). Positions 216 to 366 (PPKKEEEIGN…LKQQQQQQQQ (151 aa)) constitute a C-CAP/cofactor C-like domain.

Belongs to the TBCC family. Supercomplex made of cofactors A to E. Cofactors A and D function by capturing and stabilizing tubulin in a quasi-native conformation. Cofactor E binds to the cofactor D-tubulin complex; interaction with cofactor C then causes the release of tubulin polypeptides that are committed to the native state.

Functionally, tubulin-folding protein; involved in the final step of the tubulin folding pathway. The polypeptide is Tubulin-specific chaperone C (tbcc) (Dictyostelium discoideum (Social amoeba)).